The chain runs to 217 residues: uncharacterized protein (217 aa).

Residues 1 to 32 (MTLKKHRGKMSEKSNVNKKFTNSTQNNSNWSN) form a disordered region. Low complexity predominate over residues 22 to 32 (NSTQNNSNWSN).

This is an uncharacterized protein from Acidianus filamentous virus 2 (isolate Italy/Pozzuoli) (AFV-2).